A 300-amino-acid polypeptide reads, in one-letter code: Ribosomal protein L11 methyltransferase (300 aa).

S-adenosyl-L-methionine is bound by residues threonine 152, glycine 173, aspartate 195, and asparagine 234.

This sequence belongs to the methyltransferase superfamily. PrmA family.

It localises to the cytoplasm. It carries out the reaction L-lysyl-[protein] + 3 S-adenosyl-L-methionine = N(6),N(6),N(6)-trimethyl-L-lysyl-[protein] + 3 S-adenosyl-L-homocysteine + 3 H(+). Methylates ribosomal protein L11. In Paraburkholderia phytofirmans (strain DSM 17436 / LMG 22146 / PsJN) (Burkholderia phytofirmans), this protein is Ribosomal protein L11 methyltransferase.